Consider the following 275-residue polypeptide: tRNA (guanine-N(1)-)-methyltransferase (275 aa).

S-adenosyl-L-methionine-binding positions include glycine 124 and 149–154 (IGDYVL).

The protein belongs to the RNA methyltransferase TrmD family. As to quaternary structure, homodimer.

It localises to the cytoplasm. It catalyses the reaction guanosine(37) in tRNA + S-adenosyl-L-methionine = N(1)-methylguanosine(37) in tRNA + S-adenosyl-L-homocysteine + H(+). Its function is as follows. Specifically methylates guanosine-37 in various tRNAs. This Bifidobacterium animalis subsp. lactis (strain AD011) protein is tRNA (guanine-N(1)-)-methyltransferase.